The chain runs to 586 residues: Dihydroxy-acid dehydratase 2 (586 aa).

Residue Cys-68 coordinates [2Fe-2S] cluster. Asp-100 contacts Mg(2+). A [2Fe-2S] cluster-binding site is contributed by Cys-141. Positions 142 and 143 each coordinate Mg(2+). Position 143 is an N6-carboxylysine (Lys-143). Cys-213 contacts [2Fe-2S] cluster. Glu-463 contributes to the Mg(2+) binding site. The active-site Proton acceptor is the Ser-489.

This sequence belongs to the IlvD/Edd family. As to quaternary structure, homodimer. [2Fe-2S] cluster is required as a cofactor. Requires Mg(2+) as cofactor.

It catalyses the reaction (2R)-2,3-dihydroxy-3-methylbutanoate = 3-methyl-2-oxobutanoate + H2O. The enzyme catalyses (2R,3R)-2,3-dihydroxy-3-methylpentanoate = (S)-3-methyl-2-oxopentanoate + H2O. The protein operates within amino-acid biosynthesis; L-isoleucine biosynthesis; L-isoleucine from 2-oxobutanoate: step 3/4. Its pathway is amino-acid biosynthesis; L-valine biosynthesis; L-valine from pyruvate: step 3/4. Its function is as follows. Functions in the biosynthesis of branched-chain amino acids. Catalyzes the dehydration of (2R,3R)-2,3-dihydroxy-3-methylpentanoate (2,3-dihydroxy-3-methylvalerate) into 2-oxo-3-methylpentanoate (2-oxo-3-methylvalerate) and of (2R)-2,3-dihydroxy-3-methylbutanoate (2,3-dihydroxyisovalerate) into 2-oxo-3-methylbutanoate (2-oxoisovalerate), the penultimate precursor to L-isoleucine and L-valine, respectively. This Mesorhizobium japonicum (strain LMG 29417 / CECT 9101 / MAFF 303099) (Mesorhizobium loti (strain MAFF 303099)) protein is Dihydroxy-acid dehydratase 2.